A 938-amino-acid polypeptide reads, in one-letter code: Kinesin-like protein KIN-7B (938 aa).

In terms of domain architecture, Kinesin motor spans 29–348 (KILVTVRMRP…LSFAMSAKEV (320 aa)). Residue 113 to 120 (GQTSSGKT) participates in ATP binding. Residues 357-431 (VVSEKKLLKH…DLERKAKERK (75 aa)) are a coiled coil. Residues 450-481 (TKEESIPSKSVPSSRRTARDRRKDNVRQSLTS) form a disordered region. A coiled-coil region spans residues 555–590 (KANLKEEINRLNSQEIAALEKKLECVQNTIDMLVSS). Residues 628 to 678 (CSPLSGTENKDPESNVVSANSAPVSFGATPPKRDDNRCRTQSREGTPVSRQ) are disordered. Low complexity predominate over residues 641 to 652 (SNVVSANSAPVS). Over residues 658-669 (PKRDDNRCRTQS) the composition is skewed to basic and acidic residues.

This sequence belongs to the TRAFAC class myosin-kinesin ATPase superfamily. Kinesin family. KIN-7 subfamily. Interacts with ANP3. Interacts with TIO/FU. In terms of tissue distribution, expressed in roots, stems, flowers, pollen mother cells and embryos.

Its subcellular location is the cytoplasm. It is found in the cytoskeleton. It localises to the phragmoplast. Its function is as follows. Probable plus end-directed motor protein that functions in the NACK-PQR (ANP3-MKK6-MPK4) MAP kinase signaling pathway, which is essential for somatic cell cytokinesis, especially for the cell-plate formation and its expansion. May regulate the activity and the localization of ANP3, probably by association through the non-catalytic region of the kinase. Functionally redundant with NACK1 and essential to promote the progression of cytokinesis and for cellularization (formation of the cell plate) during microgametogenesis and megagametogenesis. This Arabidopsis thaliana (Mouse-ear cress) protein is Kinesin-like protein KIN-7B.